The primary structure comprises 393 residues: Acetylornithine aminotransferase 1 (393 aa).

Residue Arg-131 coordinates N(2)-acetyl-L-ornithine. Position 215 to 218 (215 to 218 (DEVQ)) interacts with pyridoxal 5'-phosphate. Position 244 is an N6-(pyridoxal phosphate)lysine (Lys-244). N(2)-acetyl-L-ornithine is bound at residue Thr-272. Thr-273 lines the pyridoxal 5'-phosphate pocket.

This sequence belongs to the class-III pyridoxal-phosphate-dependent aminotransferase family. ArgD subfamily. In terms of assembly, homodimer. Requires pyridoxal 5'-phosphate as cofactor.

Its subcellular location is the cytoplasm. The catalysed reaction is N(2)-acetyl-L-ornithine + 2-oxoglutarate = N-acetyl-L-glutamate 5-semialdehyde + L-glutamate. It functions in the pathway amino-acid biosynthesis; L-arginine biosynthesis; N(2)-acetyl-L-ornithine from L-glutamate: step 4/4. This chain is Acetylornithine aminotransferase 1, found in Bordetella parapertussis (strain 12822 / ATCC BAA-587 / NCTC 13253).